Reading from the N-terminus, the 144-residue chain is Large ribosomal subunit protein uL15 (144 aa).

The tract at residues Met-1–Leu-57 is disordered. Gly residues predominate over residues Arg-21–Ser-31.

It belongs to the universal ribosomal protein uL15 family. As to quaternary structure, part of the 50S ribosomal subunit.

Binds to the 23S rRNA. The polypeptide is Large ribosomal subunit protein uL15 (Dichelobacter nodosus (strain VCS1703A)).